A 74-amino-acid polypeptide reads, in one-letter code: Mu-conotoxin-like T3.1 (74 aa).

Residues 1 to 19 (MSKLGVLLTICLLLFPLTA) form the signal peptide. A propeptide spanning residues 20–74 (LPMDGDEPADRPAERMQDNISSEQHPLFEERHGCCKGPEGCSSRECRPQHCCGRR) is cleaved from the precursor. Intrachain disulfides connect Cys-53–Cys-65, Cys-54–Cys-70, and Cys-60–Cys-71. Position 57 is a 4-hydroxyproline (Pro-57). 2 positions are modified to 4-carboxyglutamate: Glu-58 and Glu-64. 4-hydroxyproline is present on Pro-67. Cys-71 bears the Cysteine amide mark.

It belongs to the conotoxin M superfamily. Expressed by the venom duct.

It is found in the secreted. Functionally, mu-conotoxins block voltage-gated sodium channels (Nav). In vitro, this synthetic peptide displays a low blocking effect in mouse extensor digitorum longus muscles (IC(50)=616 nM). This Conus tulipa (Fish-hunting cone snail) protein is Mu-conotoxin-like T3.1.